The following is a 305-amino-acid chain: ADP,ATP carrier protein (305 aa).

Solcar repeat units lie at residues 8–101 (SNFA…IKAM), 112–204 (KWFA…LKPL), and 212–298 (NSFL…LQVI). Helical transmembrane passes span 10–37 (FAID…VKLL), 78–102 (TANV…KAMF), 110–130 (YAKW…LSLL), 180–201 (FLPS…YDSL), and 215–235 (LASF…SYPL). 2 residues coordinate ADP: Arg83 and Lys95. An ADP-binding site is contributed by Arg239. Residues 239 to 244 (RRRMMM) are important for transport activity. A Nucleotide carrier signature motif motif is present at residues 239–244 (RRRMMM). A helical transmembrane segment spans residues 275–295 (CGANILRGVAGAGVISMYDQL).

Belongs to the mitochondrial carrier (TC 2.A.29) family. Monomer.

It localises to the mitochondrion inner membrane. The catalysed reaction is ADP(in) + ATP(out) = ADP(out) + ATP(in). With respect to regulation, the matrix-open state (m-state) is inhibited by the membrane-permeable bongkrekic acid (BKA). The cytoplasmic-open state (c-state) is inhibited by the membrane-impermeable toxic inhibitor carboxyatractyloside (CATR). In terms of biological role, ADP:ATP antiporter that mediates import of ADP into the mitochondrial matrix for ATP synthesis, and export of ATP out to fuel the cell. Cycles between the cytoplasmic-open state (c-state) and the matrix-open state (m-state): operates by the alternating access mechanism with a single substrate-binding site intermittently exposed to either the cytosolic (c-state) or matrix (m-state) side of the inner mitochondrial membrane. The sequence is that of ADP,ATP carrier protein (AAC) from Kluyveromyces lactis (strain ATCC 8585 / CBS 2359 / DSM 70799 / NBRC 1267 / NRRL Y-1140 / WM37) (Yeast).